The primary structure comprises 139 residues: FLYWCH family member 2 (139 aa).

Disordered stretches follow at residues 1–36 and 86–139; these read MPQP…PRKP and EAQR…STSP. Over residues 98-107 the composition is skewed to basic and acidic residues; that stretch reads PEQKRSKQNL. Positions 120 to 130 are enriched in low complexity; the sequence is VSSSSSEETTV.

This chain is FLYWCH family member 2 (Flywch2), found in Mus musculus (Mouse).